Consider the following 426-residue polypeptide: Glutamate-1-semialdehyde 2,1-aminomutase (426 aa).

K265 carries the post-translational modification N6-(pyridoxal phosphate)lysine.

Belongs to the class-III pyridoxal-phosphate-dependent aminotransferase family. HemL subfamily. In terms of assembly, homodimer. Pyridoxal 5'-phosphate is required as a cofactor.

The protein resides in the cytoplasm. The catalysed reaction is (S)-4-amino-5-oxopentanoate = 5-aminolevulinate. It participates in porphyrin-containing compound metabolism; protoporphyrin-IX biosynthesis; 5-aminolevulinate from L-glutamyl-tRNA(Glu): step 2/2. The chain is Glutamate-1-semialdehyde 2,1-aminomutase from Pectobacterium carotovorum subsp. carotovorum (strain PC1).